Reading from the N-terminus, the 116-residue chain is uncharacterized protein (116 aa).

A helical membrane pass occupies residues 58–78 (IIVDFKFIFQIFLILSFGFFA).

It is found in the membrane. This is an uncharacterized protein from Rickettsia prowazekii (strain Madrid E).